Here is a 686-residue protein sequence, read N- to C-terminus: Aminodeoxychorismate synthase (686 aa).

Positions 2–194 (RTLLIDNYDS…RDLALAHHRA (193 aa)) constitute a Glutamine amidotransferase type-1 domain. The active-site Nucleophile is Cys-81. Active-site residues include His-168 and Glu-170. Residues 233-686 (LDSSSVLEGA…LDGSAVAGAR (454 aa)) are PABB component.

In the C-terminal section; belongs to the anthranilate synthase component I family.

The enzyme catalyses chorismate + L-glutamine = 4-amino-4-deoxychorismate + L-glutamate. Its pathway is antibiotic biosynthesis. Its function is as follows. Involved in chloramphenicol biosynthesis. Catalyzes the biosynthesis of 4-amino-4-deoxychorismate (ADC) from chorismate and glutamine. The chain is Aminodeoxychorismate synthase from Streptomyces venezuelae (strain ATCC 10712 / CBS 650.69 / DSM 40230 / JCM 4526 / NBRC 13096 / PD 04745).